A 931-amino-acid polypeptide reads, in one-letter code: Up-regulator of cell proliferation (931 aa).

The residue at position 3 (Ser3) is a Phosphoserine. In terms of domain architecture, VLIG-type G spans 689–929; that stretch reads RSRLVVLSTV…NIQQLIELVR (241 aa).

This sequence belongs to the TRAFAC class dynamin-like GTPase superfamily. Very large inducible GTPase (VLIG) family. Strongly expressed in hepatitis B virus-infected liver and in HCC cells. Also highly expressed in well-differentiated gastric cancer tissues and various gastric cancer cell lines.

The protein resides in the cytoplasm. It is found in the nucleus. Functionally, may be involved in cell cycle progression through the regulation of cyclin D1 expression. May participate in the development of hepatocellular carcinoma (HCC) by promoting hepatocellular growth and survival. May play an important role in development of gastric cancer. This Homo sapiens (Human) protein is Up-regulator of cell proliferation (URGCP).